The primary structure comprises 457 residues: Putative methyltransferase MT1451 (457 aa).

S-adenosyl-L-methionine contacts are provided by residues 276-282 (CAGPGGK), glutamate 301, aspartate 325, and aspartate 341. The Nucleophile role is filled by cysteine 394.

The protein belongs to the class I-like SAM-binding methyltransferase superfamily. RsmB/NOP family.

Its function is as follows. May act as RNA methyltransferase. The sequence is that of Putative methyltransferase MT1451 from Mycobacterium tuberculosis (strain CDC 1551 / Oshkosh).